The primary structure comprises 369 residues: Glutamate 5-kinase (369 aa).

Position 8 (Lys-8) interacts with ATP. The substrate site is built by Ser-49, Asp-136, and Asn-148. Residues 168-169 (TD) and 211-217 (TGGMATK) contribute to the ATP site. The region spanning 276–354 (TGKLYLDSGA…DEISQILGYG (79 aa)) is the PUA domain.

Belongs to the glutamate 5-kinase family.

It is found in the cytoplasm. It catalyses the reaction L-glutamate + ATP = L-glutamyl 5-phosphate + ADP. It participates in amino-acid biosynthesis; L-proline biosynthesis; L-glutamate 5-semialdehyde from L-glutamate: step 1/2. Functionally, catalyzes the transfer of a phosphate group to glutamate to form L-glutamate 5-phosphate. The chain is Glutamate 5-kinase from Rippkaea orientalis (strain PCC 8801 / RF-1) (Cyanothece sp. (strain PCC 8801)).